The chain runs to 206 residues: Ribosome maturation factor RimM (206 aa).

In terms of domain architecture, PRC barrel spans 113-206; that stretch reads DDEYYWVDLI…RIDSNWPTEL (94 aa).

It belongs to the RimM family. As to quaternary structure, binds ribosomal protein uS19.

The protein localises to the cytoplasm. Functionally, an accessory protein needed during the final step in the assembly of 30S ribosomal subunit, possibly for assembly of the head region. Essential for efficient processing of 16S rRNA. May be needed both before and after RbfA during the maturation of 16S rRNA. It has affinity for free ribosomal 30S subunits but not for 70S ribosomes. The chain is Ribosome maturation factor RimM from Bordetella petrii (strain ATCC BAA-461 / DSM 12804 / CCUG 43448).